The sequence spans 787 residues: Integrin beta-6 (787 aa).

The first 21 residues, 1–21, serve as a signal peptide directing secretion; that stretch reads MGIELVCLFLLLLGRNDHVQG. One can recognise a PSI domain in the interval 22 to 71; that stretch reads GCAWSGAETCSDCLLTGPHCAWCSQENFTHLSGAGERCDTPENLLAKGCQ. Residues 22–708 are Extracellular-facing; the sequence is GCAWSGAETC…KDCPKPPNIP (687 aa). Cystine bridges form between Cys-23–Cys-41, Cys-31–Cys-454, Cys-34–Cys-59, Cys-44–Cys-70, Cys-197–Cys-204, Cys-252–Cys-293, Cys-394–Cys-406, Cys-426–Cys-452, Cys-456–Cys-476, Cys-467–Cys-479, Cys-481–Cys-490, Cys-492–Cys-519, Cys-502–Cys-517, Cys-511–Cys-522, Cys-524–Cys-537, Cys-539–Cys-560, Cys-544–Cys-558, Cys-552–Cys-563, and Cys-565–Cys-574. N-linked (GlcNAc...) asparagine glycans are attached at residues Asn-48 and Asn-97. The region spanning 131–371 is the VWFA domain; that stretch reads YPVDLYYLMD…QLIISAYEEL (241 aa). Asp-140, Ser-142, and Ser-144 together coordinate Mg(2+). Ca(2+)-binding residues include Ser-144, Asp-147, Asp-148, and Glu-179. Positions 235, 237, 239, and 240 each coordinate Ca(2+). Residue Glu-240 participates in Mg(2+) binding. N-linked (GlcNAc...) asparagine glycosylation is present at Asn-260. Positions 271 and 355 each coordinate Ca(2+). The N-linked (GlcNAc...) asparagine glycan is linked to Asn-387. A glycan (N-linked (GlcNAc...) asparagine) is linked at Asn-418. I-EGF domains lie at 456–491, 492–538, 539–575, and 576–615; these read CQRE…PRCE, CGED…PYCQ, CDNF…EYCN, and CTTS…PTCE. Residues Asn-463 and Asn-471 are each glycosylated (N-linked (GlcNAc...) asparagine). Asn-541 is a glycosylation site (N-linked (GlcNAc...) asparagine). Asn-575 carries N-linked (GlcNAc...) asparagine glycosylation. 9 disulfides stabilise this stretch: Cys-576–Cys-599, Cys-583–Cys-597, Cys-591–Cys-602, Cys-604–Cys-614, Cys-617–Cys-620, Cys-624–Cys-669, Cys-630–Cys-649, Cys-633–Cys-645, and Cys-677–Cys-701. Residue Asn-695 is glycosylated (N-linked (GlcNAc...) asparagine). A helical membrane pass occupies residues 709 to 729; sequence MIMLGVSLAILLIGVVLLCIW. Positions 730–757 are interaction with HAX1; the sequence is KLLVSFHDRKEVAKFEAERSKAKWQTGT. Over 730-787 the chain is Cytoplasmic; sequence KLLVSFHDRKEVAKFEAERSKAKWQTGTNPLYRGSTSTFKNVTYKHREKHKVGLSSDG.

This sequence belongs to the integrin beta chain family. As to quaternary structure, heterodimer of an alpha and a beta subunit. Interacts with FLNB. Interacts with HAX1. ITGAV:ITGB6 interacts with FBN1. ITGAV:ITGB6 interacts with TGFB1.

It is found in the cell membrane. The protein resides in the cell junction. The protein localises to the focal adhesion. In terms of biological role, integrin alpha-V:beta-6 (ITGAV:ITGB6) is a receptor for fibronectin and cytotactin. It recognizes the sequence R-G-D in its ligands. ITGAV:ITGB6 acts as a receptor for fibrillin-1 (FBN1) and mediates R-G-D-dependent cell adhesion to FBN1. Integrin alpha-V:beta-6 (ITGAV:ITGB6) mediates R-G-D-dependent release of transforming growth factor beta-1 (TGF-beta-1) from regulatory Latency-associated peptide (LAP), thereby playing a key role in TGF-beta-1 activation. This chain is Integrin beta-6 (Itgb6), found in Rattus norvegicus (Rat).